A 409-amino-acid polypeptide reads, in one-letter code: Probable tRNA N6-adenosine threonylcarbamoyltransferase, mitochondrial (409 aa).

A mitochondrion-targeting transit peptide spans 1–31 (MHALRNFAGNGIANVFGCGIRRRLSYVLGIE). Residues histidine 135 and histidine 139 each coordinate a divalent metal cation. Residues 159–163 (LASGG), aspartate 192, glycine 212, glutamate 216, 322–323 (NN), and serine 350 each bind substrate. Aspartate 351 lines the a divalent metal cation pocket.

Belongs to the KAE1 / TsaD family. As to quaternary structure, homodimer. It depends on a divalent metal cation as a cofactor.

The protein localises to the mitochondrion. The enzyme catalyses L-threonylcarbamoyladenylate + adenosine(37) in tRNA = N(6)-L-threonylcarbamoyladenosine(37) in tRNA + AMP + H(+). In terms of biological role, required for the formation of a threonylcarbamoyl group on adenosine at position 37 (t(6)A37) in mitochondrial tRNAs that read codons beginning with adenine. Probably involved in the transfer of the threonylcarbamoyl moiety of threonylcarbamoyl-AMP (TC-AMP) to the N6 group of A37. Involved in mitochondrial genome maintenance. This chain is Probable tRNA N6-adenosine threonylcarbamoyltransferase, mitochondrial, found in Drosophila melanogaster (Fruit fly).